Consider the following 251-residue polypeptide: Ubiquinone/menaquinone biosynthesis C-methyltransferase UbiE (251 aa).

Residues T74, D95, and 123-124 (NA) each bind S-adenosyl-L-methionine.

The protein belongs to the class I-like SAM-binding methyltransferase superfamily. MenG/UbiE family.

The catalysed reaction is a 2-demethylmenaquinol + S-adenosyl-L-methionine = a menaquinol + S-adenosyl-L-homocysteine + H(+). It catalyses the reaction a 2-methoxy-6-(all-trans-polyprenyl)benzene-1,4-diol + S-adenosyl-L-methionine = a 5-methoxy-2-methyl-3-(all-trans-polyprenyl)benzene-1,4-diol + S-adenosyl-L-homocysteine + H(+). The protein operates within quinol/quinone metabolism; menaquinone biosynthesis; menaquinol from 1,4-dihydroxy-2-naphthoate: step 2/2. Its pathway is cofactor biosynthesis; ubiquinone biosynthesis. Methyltransferase required for the conversion of demethylmenaquinol (DMKH2) to menaquinol (MKH2) and the conversion of 2-polyprenyl-6-methoxy-1,4-benzoquinol (DDMQH2) to 2-polyprenyl-3-methyl-6-methoxy-1,4-benzoquinol (DMQH2). The chain is Ubiquinone/menaquinone biosynthesis C-methyltransferase UbiE from Shewanella oneidensis (strain ATCC 700550 / JCM 31522 / CIP 106686 / LMG 19005 / NCIMB 14063 / MR-1).